The sequence spans 261 residues: Hemin import ATP-binding protein HmuV (261 aa).

The region spanning 3-243 is the ABC transporter domain; the sequence is LQAQDLSVDR…ANLRRVYGVE (241 aa). 35–42 contributes to the ATP binding site; the sequence is GANGAGKS.

Belongs to the ABC transporter superfamily. Heme (hemin) importer (TC 3.A.1.14.5) family. The complex is composed of two ATP-binding proteins (HmuV), two transmembrane proteins (HmuU) and a solute-binding protein (HmuT).

The protein localises to the cell inner membrane. Functionally, part of the ABC transporter complex HmuTUV involved in hemin import. Responsible for energy coupling to the transport system. The sequence is that of Hemin import ATP-binding protein HmuV from Bordetella avium (strain 197N).